A 185-amino-acid polypeptide reads, in one-letter code: Peptidyl-tRNA hydrolase (185 aa).

Y14 lines the tRNA pocket. H19 functions as the Proton acceptor in the catalytic mechanism. TRNA is bound by residues Y65, N67, and N113.

It belongs to the PTH family. Monomer.

The protein resides in the cytoplasm. It catalyses the reaction an N-acyl-L-alpha-aminoacyl-tRNA + H2O = an N-acyl-L-amino acid + a tRNA + H(+). Functionally, hydrolyzes ribosome-free peptidyl-tRNAs (with 1 or more amino acids incorporated), which drop off the ribosome during protein synthesis, or as a result of ribosome stalling. Catalyzes the release of premature peptidyl moieties from peptidyl-tRNA molecules trapped in stalled 50S ribosomal subunits, and thus maintains levels of free tRNAs and 50S ribosomes. In Rickettsia canadensis (strain McKiel), this protein is Peptidyl-tRNA hydrolase.